The following is a 614-amino-acid chain: DNA ligase (614 aa).

Residues 29 to 33 (DQDYD) and 73 to 74 (SI) contribute to the NAD(+) site. Lys-111 acts as the N6-AMP-lysine intermediate in catalysis. Positions 127, 158, and 270 each coordinate NAD(+). Zn(2+)-binding residues include Cys-358, Cys-361, Cys-374, and Cys-380. The BRCT domain maps to 538-614 (TLTHELFDKK…MTETDYLSKI (77 aa)).

It belongs to the NAD-dependent DNA ligase family. LigA subfamily. The cofactor is Mg(2+). Requires Mn(2+) as cofactor.

It catalyses the reaction NAD(+) + (deoxyribonucleotide)n-3'-hydroxyl + 5'-phospho-(deoxyribonucleotide)m = (deoxyribonucleotide)n+m + AMP + beta-nicotinamide D-nucleotide.. DNA ligase that catalyzes the formation of phosphodiester linkages between 5'-phosphoryl and 3'-hydroxyl groups in double-stranded DNA using NAD as a coenzyme and as the energy source for the reaction. It is essential for DNA replication and repair of damaged DNA. This chain is DNA ligase, found in Ruthia magnifica subsp. Calyptogena magnifica.